A 271-amino-acid chain; its full sequence is uncharacterized protein (271 aa).

The protein belongs to the HAD-like hydrolase superfamily.

This is an uncharacterized protein from Staphylococcus aureus (strain Mu50 / ATCC 700699).